Here is a 104-residue protein sequence, read N- to C-terminus: Large ribosomal subunit protein bL21 (104 aa).

The protein belongs to the bacterial ribosomal protein bL21 family. Part of the 50S ribosomal subunit. Contacts protein L20.

Its function is as follows. This protein binds to 23S rRNA in the presence of protein L20. The protein is Large ribosomal subunit protein bL21 of Clostridium botulinum (strain 657 / Type Ba4).